Reading from the N-terminus, the 159-residue chain is Growth arrest and DNA damage-inducible protein GADD45 gamma (159 aa).

The tract at residues 43-86 (VYESAKVLNVDPDNVTFCVLAADEEDEGDIALQIHFTLIQAFCC) is homodimerization.

This sequence belongs to the GADD45 family. In terms of assembly, undergoes concentration-dependent homodimerization, which is required for growth inhibititory activity and enhances interaction with PCNA. Interacts with GADD45GIP1. Interacts with PCNA.

In terms of biological role, involved in the regulation of growth and apoptosis. Mediates activation of stress-responsive MTK1/MEKK4 MAPKKK. The polypeptide is Growth arrest and DNA damage-inducible protein GADD45 gamma (Gadd45g) (Mus musculus (Mouse)).